The sequence spans 353 residues: MTIAIGKSSKEPKGLFDSMDDWLRRDRFVFVGWSGLLLFPCAYFSLGGWFTGTTFVTSWYTHGLASSYLEGCNFLTAAVSTPANSLAHSLLLLWGPEAQGDFTRWCQLGGLWTFVALHGAFALIGFMLRQFELARSVQLRPYNAIAFSGPIAVFVSVFLIYPLGQSGWFFAPSFGVAAIFRFILFFQGFHNWTLNPFHMMGVAGVLGAALLCAIHGATVENTLFEDGDGANTFRAFNPTQSEETYSMVTANRFWSQIFGVAFSNKRWLHFFMLFVPVTGLWMSAIGVVGLALNLRAYDFVSQEIRAAEDPEFETFYTKNILLNEGIRAWMAAQDQPHENLVFPEEVLPRGNAL.

An N-acetylthreonine modification is found at threonine 2. Position 2 is a phosphothreonine (threonine 2). Residues 41-61 (CAYFSLGGWFTGTTFVTSWYT) traverse the membrane as a helical segment. A chlorophyll a-binding site is contributed by histidine 118. Residues 125–141 (GFMLRQFELARSVQLRP) form a helical membrane-spanning segment. Residues glutamine 130 and asparagine 143 each contribute to the pheophytin a site. Residues 153–166 (VFVSVFLIYPLGQS) form a helical membrane-spanning segment. Histidine 198 provides a ligand contact to chlorophyll a. The helical transmembrane segment at 208 to 228 (AALLCAIHGATVENTLFEDGD) threads the bilayer. A plastoquinone contacts are provided by histidine 215 and phenylalanine 262. Histidine 215 contacts Fe cation. Histidine 269 is a binding site for Fe cation. Residues 279–295 (GLWMSAIGVVGLALNLR) traverse the membrane as a helical segment.

The protein belongs to the reaction center PufL/M/PsbA/D family. As to quaternary structure, PSII is composed of 1 copy each of membrane proteins PsbA, PsbB, PsbC, PsbD, PsbE, PsbF, PsbH, PsbI, PsbJ, PsbK, PsbL, PsbM, PsbT, PsbX, PsbY, PsbZ, Psb30/Ycf12, at least 3 peripheral proteins of the oxygen-evolving complex and a large number of cofactors. It forms dimeric complexes. Requires The D1/D2 heterodimer binds P680, chlorophylls that are the primary electron donor of PSII, and subsequent electron acceptors. It shares a non-heme iron and each subunit binds pheophytin, quinone, additional chlorophylls, carotenoids and lipids. There is also a Cl(-1) ion associated with D1 and D2, which is required for oxygen evolution. The PSII complex binds additional chlorophylls, carotenoids and specific lipids. as cofactor.

It localises to the plastid. The protein localises to the chloroplast thylakoid membrane. The enzyme catalyses 2 a plastoquinone + 4 hnu + 2 H2O = 2 a plastoquinol + O2. Its function is as follows. Photosystem II (PSII) is a light-driven water:plastoquinone oxidoreductase that uses light energy to abstract electrons from H(2)O, generating O(2) and a proton gradient subsequently used for ATP formation. It consists of a core antenna complex that captures photons, and an electron transfer chain that converts photonic excitation into a charge separation. The D1/D2 (PsbA/PsbD) reaction center heterodimer binds P680, the primary electron donor of PSII as well as several subsequent electron acceptors. D2 is needed for assembly of a stable PSII complex. This is Photosystem II D2 protein from Physcomitrium patens (Spreading-leaved earth moss).